The following is a 207-amino-acid chain: Outer-membrane lipoprotein LolB (207 aa).

A signal peptide spans 1-21 (MPTNTVRCLRLLPLASVLLAA). A lipid anchor (N-palmitoyl cysteine) is attached at Cys22. Cys22 carries the S-diacylglycerol cysteine lipid modification.

It belongs to the LolB family. Monomer.

It localises to the cell outer membrane. In terms of biological role, plays a critical role in the incorporation of lipoproteins in the outer membrane after they are released by the LolA protein. The polypeptide is Outer-membrane lipoprotein LolB (Pectobacterium carotovorum subsp. carotovorum (strain PC1)).